Reading from the N-terminus, the 452-residue chain is Pup--protein ligase (452 aa).

Glu-9 serves as a coordination point for Mg(2+). Position 53 (Arg-53) interacts with ATP. Residue Tyr-55 participates in Mg(2+) binding. Asp-57 functions as the Proton acceptor in the catalytic mechanism. Position 63 (Glu-63) interacts with Mg(2+). Positions 66 and 419 each coordinate ATP.

The protein belongs to the Pup ligase/Pup deamidase family. Pup-conjugating enzyme subfamily.

The enzyme catalyses ATP + [prokaryotic ubiquitin-like protein]-L-glutamate + [protein]-L-lysine = ADP + phosphate + N(6)-([prokaryotic ubiquitin-like protein]-gamma-L-glutamyl)-[protein]-L-lysine.. Its pathway is protein degradation; proteasomal Pup-dependent pathway. The protein operates within protein modification; protein pupylation. Functionally, catalyzes the covalent attachment of the prokaryotic ubiquitin-like protein modifier Pup to the proteasomal substrate proteins, thereby targeting them for proteasomal degradation. This tagging system is termed pupylation. The ligation reaction involves the side-chain carboxylate of the C-terminal glutamate of Pup and the side-chain amino group of a substrate lysine. The protein is Pup--protein ligase of Mycobacterium leprae (strain Br4923).